Here is a 1189-residue protein sequence, read N- to C-terminus: Phosphatidylinositol 3,4,5-trisphosphate 5-phosphatase 1 (1189 aa).

The 97-residue stretch at tryptophan 5 to valine 101 folds into the SH2 domain. The segment covering leucine 103–valine 117 has biased composition (acidic residues). The disordered stretch occupies residues leucine 103 to proline 132. Residues proline 124–arginine 129 carry the SH3-binding 1 motif. Position 243 is a phosphoserine (serine 243). The tract at residues threonine 870 to serine 906 is disordered. The short motif at asparagine 912–tyrosine 915 is the NPXY motif 1 element. Tyrosine 915 carries the post-translational modification Phosphotyrosine. The tract at residues glycine 922–glutamine 1189 is disordered. Residues glutamine 931–serine 943 show a composition bias toward polar residues. Serine 934 carries the phosphoserine modification. At tyrosine 944 the chain carries Phosphotyrosine. Serine 960 bears the Phosphoserine mark. The segment covering proline 961–serine 971 has biased composition (pro residues). Residue threonine 963 is modified to Phosphothreonine. Positions proline 969–lysine 974 match the SH3-binding 2 motif. Position 971 is a phosphoserine (serine 971). The interaction with DAB2 stretch occupies residues methionine 1016–lysine 1030. The short motif at asparagine 1019 to tyrosine 1022 is the NPXY motif 2 element. Tyrosine 1022 is subject to Phosphotyrosine. Positions proline 1033–proline 1047 are enriched in basic and acidic residues. The SH3-binding 3 signature appears at proline 1040 to proline 1051. Residues proline 1134–valine 1145 are compositionally biased toward pro residues. Positions lysine 1157 to glutamate 1177 are enriched in basic and acidic residues.

Belongs to the inositol 1,4,5-trisphosphate 5-phosphatase family. Interacts with tyrosine phosphorylated form of SHC1. Interacts with tyrosine phosphorylated form of DOK1. Interacts with tyrosine phosphorylated form of DOK3. Interacts with tyrosine phosphorylated form of SLAMF1/CD150. Interacts with PTPN11 in response to IL-3. Interacts with receptor EPOR. Interacts with receptors MS4A2/FCER1B and FCER1G. Interacts with receptors FCGR2B and FCGR3. Interacts with receptor FCGR2A, leading to regulate gene expression during the phagocytic process. Interacts with GRB2. Interacts with PLCG1. Interacts with tyrosine kinases SRC and TEC. Interacts with c-Met/MET. Interacts with MILR1 (tyrosine-phosphorylated). Can weakly interact (via NPXY motif 2) with DAB2 (via PID domain); the interaction is impaired by tyrosine phosphorylation of the NPXY motif. Interacts with FCRL3 and FCRL6 (tyrosine phosphorylated form). Interacts (via SH2 domain) with tyrosine phosphorylated KLRC1 (via ITIM). Interacts with MPL/TPOR. In terms of processing, tyrosine phosphorylated by the members of the SRC family after exposure to a diverse array of extracellular stimuli such as cytokines, growth factors, antibodies, chemokines, integrin ligands and hypertonic and oxidative stress. Phosphorylated upon IgG receptor FCGR2B-binding. Specifically expressed in immune and hematopoietic cells. Expressed in bone marrow and blood cells. Levels vary considerably within this compartment. Present in at least 74% of immature CD34+ cells, whereas within the more mature population of CD33+ cells, it is present in only 10% of cells. Present in the majority of T-cells, while it is present in a minority of B-cells (at protein level).

The protein localises to the cytoplasm. Its subcellular location is the cell membrane. It is found in the membrane raft. It localises to the cytoskeleton. The protein resides in the membrane. It carries out the reaction a 1,2-diacyl-sn-glycero-3-phospho-(1D-myo-inositol-3,4,5-trisphosphate) + H2O = a 1,2-diacyl-sn-glycero-3-phospho-(1D-myo-inositol-3,4-bisphosphate) + phosphate. The catalysed reaction is 1D-myo-inositol 1,3,4,5-tetrakisphosphate + H2O = 1D-myo-inositol 1,3,4-trisphosphate + phosphate. The enzyme catalyses a 1,2-diacyl-sn-glycero-3-phospho-(1D-myo-inositol-4,5-bisphosphate) + H2O = a 1,2-diacyl-sn-glycero-3-phospho-(1D-myo-inositol 4-phosphate) + phosphate. With respect to regulation, activated upon translocation to the sites of synthesis of PtdIns(3,4,5)P3 in the membrane. In terms of biological role, phosphatidylinositol (PtdIns) phosphatase that specifically hydrolyzes the 5-phosphate of phosphatidylinositol-3,4,5-trisphosphate (PtdIns(3,4,5)P3) to produce PtdIns(3,4)P2, thereby negatively regulating the PI3K (phosphoinositide 3-kinase) pathways. Able also to hydrolyzes the 5-phosphate of phosphatidylinositol-4,5-bisphosphate (PtdIns(4,5)P3) and inositol 1,3,4,5-tetrakisphosphate. Acts as a negative regulator of B-cell antigen receptor signaling. Mediates signaling from the FC-gamma-RIIB receptor (FCGR2B), playing a central role in terminating signal transduction from activating immune/hematopoietic cell receptor systems. Acts as a negative regulator of myeloid cell proliferation/survival and chemotaxis, mast cell degranulation, immune cells homeostasis, integrin alpha-IIb/beta-3 signaling in platelets and JNK signaling in B-cells. Regulates proliferation of osteoclast precursors, macrophage programming, phagocytosis and activation and is required for endotoxin tolerance. Involved in the control of cell-cell junctions, CD32a signaling in neutrophils and modulation of EGF-induced phospholipase C activity. Key regulator of neutrophil migration, by governing the formation of the leading edge and polarization required for chemotaxis. Modulates FCGR3/CD16-mediated cytotoxicity in NK cells. Mediates the activin/TGF-beta-induced apoptosis through its Smad-dependent expression. The chain is Phosphatidylinositol 3,4,5-trisphosphate 5-phosphatase 1 (INPP5D) from Homo sapiens (Human).